Consider the following 31-residue polypeptide: Aspartate aminotransferase, cytoplasmic (31 aa).

The protein belongs to the class-I pyridoxal-phosphate-dependent aminotransferase family. As to quaternary structure, homodimer. Pyridoxal 5'-phosphate is required as a cofactor.

The protein localises to the cytoplasm. The enzyme catalyses L-aspartate + 2-oxoglutarate = oxaloacetate + L-glutamate. It carries out the reaction L-cysteine + 2-oxoglutarate = 2-oxo-3-sulfanylpropanoate + L-glutamate. The catalysed reaction is (2S)-2-aminobutanoate + 2-oxoglutarate = 2-oxobutanoate + L-glutamate. It catalyses the reaction 3-sulfino-L-alanine + 2-oxoglutarate = 3-sulfinopyruvate + L-glutamate. Functionally, biosynthesis of L-glutamate from L-aspartate or L-cysteine. Important regulator of levels of glutamate, the major excitatory neurotransmitter of the vertebrate central nervous system. Acts as a scavenger of glutamate in brain neuroprotection. The aspartate aminotransferase activity is involved in hepatic glucose synthesis during development and in adipocyte glyceroneogenesis. Using L-cysteine as substrate, regulates levels of mercaptopyruvate, an important source of hydrogen sulfide. Mercaptopyruvate is converted into H(2)S via the action of 3-mercaptopyruvate sulfurtransferase (3MST). Hydrogen sulfide is an important synaptic modulator and neuroprotectant in the brain. The chain is Aspartate aminotransferase, cytoplasmic from Oryctolagus cuniculus (Rabbit).